The primary structure comprises 375 residues: Proton-coupled zinc antiporter SLC30A8 (375 aa).

At 1–68 (MKGPEKAYLV…QREQTSAKKK (68 aa)) the chain is on the cytoplasmic side. Zn(2+) contacts are provided by H46, C47, and H48. Positions 46-48 (HCH) match the HCH Motif; seals regulatory zinc-binding pocket motif. A helical transmembrane segment spans residues 69 to 89 (LCIASLICFVFISAEIVGGYI). The Lumenal, vesicle portion of the chain corresponds to 90-98 (AGSLAVVTD). The helical transmembrane segment at 99–119 (AAHLLVDLSSFFISLGSLWLS) threads the bilayer. H101 and D105 together coordinate Zn(2+). The Cytoplasmic portion of the chain corresponds to 120-135 (SKSSTMRLTFGWYRAE). Residues 136–156 (ILGALMSIITIWLVTGVLVYL) traverse the membrane as a helical segment. Topologically, residues 157-170 (AIERIIRPDYTIDG) are lumenal, vesicle. Residues 171-191 (TVMLITSACALGANVVLALIL) form a helical membrane-spanning segment. The Cytoplasmic segment spans residues 192-223 (HQSGHGHSHAGGKHEHMASEYKPQTNASIRAA). The helical transmembrane segment at 224–244 (FIHVIGDLFQSISVLISALII) threads the bilayer. H226 and D230 together coordinate Zn(2+). Topologically, residues 245 to 251 (YFKPEYK) are lumenal, vesicle. The helical transmembrane segment at 252–272 (IADPICTFIFSIFVLITTVTV) threads the bilayer. The Cytoplasmic segment spans residues 273–375 (LRDLLNILME…ECMFCYEPTQ (103 aa)). Positions 307, 324, 351, 358, 367, and 370 each coordinate Zn(2+).

It belongs to the cation diffusion facilitator (CDF) transporter (TC 2.A.4) family. SLC30A subfamily. As to quaternary structure, homodimer.

Its subcellular location is the cytoplasmic vesicle. The protein localises to the secretory vesicle membrane. It is found in the cell membrane. It carries out the reaction Zn(2+)(in) + 2 H(+)(out) = Zn(2+)(out) + 2 H(+)(in). Proton-coupled zinc ion antiporter mediating the entry of zinc into the lumen of pancreatic beta cell secretory granules, thereby regulating insulin secretion. In Xenopus laevis (African clawed frog), this protein is Proton-coupled zinc antiporter SLC30A8 (slc30a8).